The chain runs to 302 residues: Recombination-associated protein RdgC (302 aa).

Belongs to the RdgC family.

It localises to the cytoplasm. The protein resides in the nucleoid. In terms of biological role, may be involved in recombination. This Xylella fastidiosa (strain M12) protein is Recombination-associated protein RdgC.